The chain runs to 360 residues: Peptide chain release factor 1 (360 aa).

Residue Gln-235 is modified to N5-methylglutamine. The segment at 286-313 is disordered; that stretch reads RQQAEASTRRNLLGSGDRSDRNRTYNFP.

This sequence belongs to the prokaryotic/mitochondrial release factor family. In terms of processing, methylated by PrmC. Methylation increases the termination efficiency of RF1.

The protein resides in the cytoplasm. Functionally, peptide chain release factor 1 directs the termination of translation in response to the peptide chain termination codons UAG and UAA. This chain is Peptide chain release factor 1, found in Cronobacter sakazakii (strain ATCC BAA-894) (Enterobacter sakazakii).